The chain runs to 714 residues: RanBP-type and C3HC4-type zinc finger-containing protein 1 (714 aa).

2 disordered regions span residues 1–23 (MSLS…SHLG) and 152–172 (SSST…SKAP). Residues 14–23 (PAQSSSSHLG) show a composition bias toward polar residues. Positions 225–301 (LAVVVEDASS…TAFLYLISAR (77 aa)) constitute a Ubiquitin-like domain. A RanBP2-type zinc finger spans residues 394 to 426 (RTSIQPGWACPTCTYINKPTRPGCEMCSADRPE). The interval 482-710 (ERVECRICYV…VNKQRCHPKC (229 aa)) is TRIAD supradomain. Zn(2+) is bound by residues cysteine 486, cysteine 489, cysteine 504, histidine 506, cysteine 509, cysteine 512, cysteine 527, cysteine 536, cysteine 575, cysteine 580, cysteine 595, cysteine 598, cysteine 603, cysteine 606, histidine 610, cysteine 615, cysteine 651, and cysteine 654. The RING-type 1 zinc finger occupies 486-536 (CRICYVELESGEGVLLRECLHCFCKECLRSVILMSEDPQVACPYRDESYAC). The segment at 555 to 615 (QHWLQRGLSV…CKAIHEGMNC (61 aa)) adopts an IBR-type zinc-finger fold. Residues 651 to 680 (CPQCGIIVQKKEGCDWLRCTVCHTEICWVT) form an RING-type 2; atypical zinc finger. Cysteine 664 is a catalytic residue. Cysteine 669 and cysteine 672 together coordinate Zn(2+).

Belongs to the RBR family. Component of the LUBAC complex (linear ubiquitin chain assembly complex).

It catalyses the reaction [E2 ubiquitin-conjugating enzyme]-S-ubiquitinyl-L-cysteine + [acceptor protein]-L-lysine = [E2 ubiquitin-conjugating enzyme]-L-cysteine + [acceptor protein]-N(6)-ubiquitinyl-L-lysine.. The protein operates within protein modification; protein ubiquitination. In terms of biological role, component of the LUBAC complex which conjugates linear ('Met-1'-linked) polyubiquitin chains to substrates and plays a key role in NF-kappa-B activation and regulation of inflammation. LUBAC conjugates linear polyubiquitin to ikbkg and RIPK1 and is involved in activation of the canonical NF-kappa-B and the JNK signaling pathways. Linear ubiquitination mediated by the LUBAC complex interferes with TNF-induced cell death and thereby prevents inflammation. LUBAC is recruited to the TNF-R1 signaling complex (TNF-RSC) to conjugate linear polyubiquitin to ikbkg and possibly other components contributing to the stability of the complex. The LUBAC complex is also involved in innate immunity by conjugating linear polyubiquitin chains at the surface of bacteria invading the cytosol to form the ubiquitin coat surrounding bacteria. LUBAC is not able to initiate formation of the bacterial ubiquitin coat, and can only promote formation of linear polyubiquitins on pre-existing ubiquitin. The bacterial ubiquitin coat acts as an 'eat-me' signal for xenophagy and promotes NF-kappa-B activation. Binds polyubiquitin of different linkage types. This is RanBP-type and C3HC4-type zinc finger-containing protein 1 (rbck1) from Danio rerio (Zebrafish).